Consider the following 375-residue polypeptide: Serpin B5 (375 aa).

Asparagine 99, asparagine 133, asparagine 188, and asparagine 361 each carry an N-linked (GlcNAc...) asparagine glycan.

This sequence belongs to the serpin family. Ov-serpin subfamily. Interacts with IRF6. As to expression, normal mammary epithelial cells.

Its subcellular location is the secreted. The protein resides in the extracellular space. Its function is as follows. Tumor suppressor. It blocks the growth, invasion, and metastatic properties of mammary tumors. As it does not undergo the S (stressed) to R (relaxed) conformational transition characteristic of active serpins, it exhibits no serine protease inhibitory activity. The protein is Serpin B5 (SERPINB5) of Homo sapiens (Human).